A 177-amino-acid polypeptide reads, in one-letter code: Flavodoxin (177 aa).

The region spanning 4–173 is the Flavodoxin-like domain; that stretch reads IGIFFGSDTG…RIDSWLEKLK (170 aa).

It belongs to the flavodoxin family. FMN serves as cofactor.

Functionally, low-potential electron donor to a number of redox enzymes. NifF is the electron donor to nitrogenase. This Enterobacter agglomerans (Erwinia herbicola) protein is Flavodoxin (nifF).